The primary structure comprises 158 residues: Phosphopantetheine adenylyltransferase (158 aa).

Threonine 10 provides a ligand contact to substrate. ATP-binding positions include 10–11 (TF) and histidine 18. Residues lysine 42, leucine 74, and arginine 88 each coordinate substrate. Residues 89–91 (GLR), glutamate 99, and 124–130 (NSFISST) contribute to the ATP site.

The protein belongs to the bacterial CoaD family. In terms of assembly, homohexamer. It depends on Mg(2+) as a cofactor.

It localises to the cytoplasm. It catalyses the reaction (R)-4'-phosphopantetheine + ATP + H(+) = 3'-dephospho-CoA + diphosphate. It functions in the pathway cofactor biosynthesis; coenzyme A biosynthesis; CoA from (R)-pantothenate: step 4/5. Functionally, reversibly transfers an adenylyl group from ATP to 4'-phosphopantetheine, yielding dephospho-CoA (dPCoA) and pyrophosphate. The sequence is that of Phosphopantetheine adenylyltransferase from Shewanella loihica (strain ATCC BAA-1088 / PV-4).